A 338-amino-acid polypeptide reads, in one-letter code: Large ribosomal subunit protein uL10 (338 aa).

Residues 292–338 are disordered; that stretch reads LDDDLKERVSSTASAVEAKEEEAPKEEKEEEKEEEEEAPAAGLGMLF. Residues 308-318 show a composition bias toward basic and acidic residues; sequence EAKEEEAPKEE. Residues 319–329 show a composition bias toward acidic residues; sequence KEEEKEEEEEA.

This sequence belongs to the universal ribosomal protein uL10 family. In terms of assembly, part of the 50S ribosomal subunit. Forms part of the ribosomal stalk which helps the ribosome interact with GTP-bound translation factors. Forms a heptameric L10(L12)2(L12)2(L12)2 complex, where L10 forms an elongated spine to which the L12 dimers bind in a sequential fashion.

Its function is as follows. Forms part of the ribosomal stalk, playing a central role in the interaction of the ribosome with GTP-bound translation factors. In Methanococcus aeolicus (strain ATCC BAA-1280 / DSM 17508 / OCM 812 / Nankai-3), this protein is Large ribosomal subunit protein uL10.